A 136-amino-acid chain; its full sequence is Small ribosomal subunit protein uS19 (136 aa).

Residues 114-136 form a disordered region; it reads RSRVSHGSAGVGATRSSKFVPLK.

It belongs to the universal ribosomal protein uS19 family.

Its function is as follows. Protein S19 forms a complex with S13 that binds strongly to the 16S ribosomal RNA. The polypeptide is Small ribosomal subunit protein uS19 (Methanosarcina barkeri (strain Fusaro / DSM 804)).